The chain runs to 277 residues: Phosphoribosylaminoimidazole-succinocarboxamide synthase (277 aa).

Belongs to the SAICAR synthetase family.

The catalysed reaction is 5-amino-1-(5-phospho-D-ribosyl)imidazole-4-carboxylate + L-aspartate + ATP = (2S)-2-[5-amino-1-(5-phospho-beta-D-ribosyl)imidazole-4-carboxamido]succinate + ADP + phosphate + 2 H(+). Its pathway is purine metabolism; IMP biosynthesis via de novo pathway; 5-amino-1-(5-phospho-D-ribosyl)imidazole-4-carboxamide from 5-amino-1-(5-phospho-D-ribosyl)imidazole-4-carboxylate: step 1/2. This is Phosphoribosylaminoimidazole-succinocarboxamide synthase from Salinispora arenicola (strain CNS-205).